We begin with the raw amino-acid sequence, 145 residues long: Phosphoribosyl-AMP cyclohydrolase (145 aa).

Asp-87 provides a ligand contact to Mg(2+). Cys-88 is a Zn(2+) binding site. Mg(2+)-binding residues include Asp-89 and Asp-91. Cys-104 and Cys-111 together coordinate Zn(2+).

Belongs to the PRA-CH family. In terms of assembly, homodimer. Requires Mg(2+) as cofactor. Zn(2+) serves as cofactor.

It is found in the cytoplasm. The catalysed reaction is 1-(5-phospho-beta-D-ribosyl)-5'-AMP + H2O = 1-(5-phospho-beta-D-ribosyl)-5-[(5-phospho-beta-D-ribosylamino)methylideneamino]imidazole-4-carboxamide. It participates in amino-acid biosynthesis; L-histidine biosynthesis; L-histidine from 5-phospho-alpha-D-ribose 1-diphosphate: step 3/9. Functionally, catalyzes the hydrolysis of the adenine ring of phosphoribosyl-AMP. This is Phosphoribosyl-AMP cyclohydrolase from Nitrobacter winogradskyi (strain ATCC 25391 / DSM 10237 / CIP 104748 / NCIMB 11846 / Nb-255).